Reading from the N-terminus, the 408-residue chain is LL-diaminopimelate aminotransferase (408 aa).

The substrate site is built by Tyr-15 and Gly-42. Residues Tyr-72, Ala-108–Lys-109, Tyr-132, Asn-186, Tyr-217, and Ser-245–Ser-247 contribute to the pyridoxal 5'-phosphate site. Residues Lys-109, Tyr-132, and Asn-186 each contribute to the substrate site. Lys-248 carries the post-translational modification N6-(pyridoxal phosphate)lysine. Pyridoxal 5'-phosphate contacts are provided by Arg-256 and Asn-291. Positions 291 and 386 each coordinate substrate.

It belongs to the class-I pyridoxal-phosphate-dependent aminotransferase family. LL-diaminopimelate aminotransferase subfamily. As to quaternary structure, homodimer. Pyridoxal 5'-phosphate serves as cofactor.

It carries out the reaction (2S,6S)-2,6-diaminopimelate + 2-oxoglutarate = (S)-2,3,4,5-tetrahydrodipicolinate + L-glutamate + H2O + H(+). It functions in the pathway amino-acid biosynthesis; L-lysine biosynthesis via DAP pathway; LL-2,6-diaminopimelate from (S)-tetrahydrodipicolinate (aminotransferase route): step 1/1. Its function is as follows. Involved in the synthesis of meso-diaminopimelate (m-DAP or DL-DAP), required for both lysine and peptidoglycan biosynthesis. Catalyzes the direct conversion of tetrahydrodipicolinate to LL-diaminopimelate. In Desulfotalea psychrophila (strain LSv54 / DSM 12343), this protein is LL-diaminopimelate aminotransferase.